Consider the following 477-residue polypeptide: UDP-N-acetylmuramate--L-alanine ligase (477 aa).

Position 122 to 128 (122 to 128 (GTHGKTT)) interacts with ATP.

Belongs to the MurCDEF family.

The protein localises to the cytoplasm. It catalyses the reaction UDP-N-acetyl-alpha-D-muramate + L-alanine + ATP = UDP-N-acetyl-alpha-D-muramoyl-L-alanine + ADP + phosphate + H(+). It functions in the pathway cell wall biogenesis; peptidoglycan biosynthesis. Cell wall formation. The protein is UDP-N-acetylmuramate--L-alanine ligase of Xanthomonas euvesicatoria pv. vesicatoria (strain 85-10) (Xanthomonas campestris pv. vesicatoria).